Consider the following 498-residue polypeptide: Neuronal acetylcholine receptor subunit beta-4 (498 aa).

An N-terminal signal peptide occupies residues 1–21; the sequence is MRRAPSLVLFFLVALCGRGNC. Residues 22–239 lie on the Extracellular side of the membrane; the sequence is RVANAEEKLM…RKPLFYTINL (218 aa). Residues Asn36, Asn93, Asn138, and Asn166 are each glycosylated (N-linked (GlcNAc...) asparagine). Cys153 and Cys167 form a disulfide bridge. Residues 240–255 traverse the membrane as a helical segment; that stretch reads IIPCVLTTLLAILVFY. At 256-261 the chain is on the cytoplasmic side; it reads LPSDCG. Glu262 serves as a coordination point for Na(+). Residues 262-277 form a helical membrane-spanning segment; that stretch reads EKMTLCISVLLALTFF. The Extracellular portion of the chain corresponds to 278 to 296; it reads LLLISKIVPPTSLDVPLIG. Residues 297–321 form a helical membrane-spanning segment; that stretch reads KYLMFTMVLVTFSIVTSVCVLNVHH. Residues 322–454 lie on the Cytoplasmic side of the membrane; sequence RSPSTHTMAP…QSVVEDWKYV (133 aa). Residues 357–377 are disordered; sequence ARAFPPSKSCVTKPEATATST. A helical transmembrane segment spans residues 455-478; the sequence is AMVVDRLFLWVFMFVCVLGTVGLF. Topologically, residues 479–498 are extracellular; that stretch reads LPPLFQTHAASEGPYAAQRD.

The protein belongs to the ligand-gated ion channel (TC 1.A.9) family. Acetylcholine receptor (TC 1.A.9.1) subfamily. Beta-4/CHRNB4 sub-subfamily. In terms of assembly, neuronal AChR is composed of two different types of subunits: alpha and beta. CHRNB4/Beta-4 subunit can be combined to CHRNA2/alpha-2, CHRNA3/alpha-3 or CHRNA4/alpha-4, CHRNA5/alpha-5 and CHRNB3/beta-3 to give rise to functional receptors. Forms stoichiometries such as (CHRNA3)2:(CHRNB4)3 or (CHRNA3:CHRNB4)2:CHRNB3. Interacts with RIC3; which is required for proper folding and assembly. Interacts with LYPD6.

Its subcellular location is the synaptic cell membrane. It localises to the cell membrane. The enzyme catalyses Ca(2+)(in) = Ca(2+)(out). It catalyses the reaction K(+)(in) = K(+)(out). It carries out the reaction Na(+)(in) = Na(+)(out). Activated by a myriad of ligands such as acetylcholine, cytisine, nicotine, choline and epibatidine. The heteropentamer CHRNA3:CHRNB4 activity is blocked by the alpha-conotoxin ImI and AuIB. Functionally, component of neuronal acetylcholine receptors (nAChRs) that function as pentameric, ligand-gated cation channels with high calcium permeability among other activities. nAChRs are excitatory neurotrasnmitter receptors formed by a collection of nAChR subunits known to mediate synaptic transmission in the nervous system and the neuromuscular junction. Each nAchR subunit confers differential attributes to channel properties, including activation, deactivation and desensitization kinetics, pH sensitivity, cation permeability, and binding to allosteric modulators. CHRNB4 forms heteropentameric neuronal acetylcholine receptors with CHRNA2, CHRNA3 and CHRNA4, as well as CHRNA5 and CHRNB3 as accesory subunits. CHRNA3:CHRNB4 being predominant in neurons of the autonomic ganglia, it is known as ganglionic nicotinic receptor. CHRNA3:CHRNB4 or CHRNA3:CHRNA5:CHRNB4 play also an important role in the habenulo-interpeduncular tract, modulating the mesolimbic dopamine system and affecting reward circuits and addiction. Hypothalamic CHRNA3:CHRNB4 nAChR activation by nicotine leads to activation of POMC neurons and a decrease in food intake. This Homo sapiens (Human) protein is Neuronal acetylcholine receptor subunit beta-4.